A 466-amino-acid polypeptide reads, in one-letter code: Peptidyl-prolyl cis-trans isomerase CYP37, chloroplastic (466 aa).

Residues 1 to 65 (MASPLSSSTV…GTKELIHSCN (65 aa)) constitute a chloroplast transit peptide. The transit peptide at 66–114 (SSIDSKLNTFEAGSKNLEKLVATILIFVQVWSPLPLFGLDSAYISPAEA) directs the protein to the thylakoid. Residues 278-466 (TFSAEAGGDQ…VQNNNINEST (189 aa)) form the PPIase cyclophilin-type domain.

In terms of tissue distribution, aerial parts.

The protein localises to the plastid. It is found in the chloroplast thylakoid lumen. The catalysed reaction is [protein]-peptidylproline (omega=180) = [protein]-peptidylproline (omega=0). Functionally, PPIases accelerate the folding of proteins. It catalyzes the cis-trans isomerization of proline imidic peptide bonds in oligopeptides. The protein is Peptidyl-prolyl cis-trans isomerase CYP37, chloroplastic (CYP37) of Arabidopsis thaliana (Mouse-ear cress).